We begin with the raw amino-acid sequence, 174 residues long: MGKITFYEDRGFQGRHYECSTDHSNLQPYFSRCNSVRVDSGCWMLYEQPNFAGCQYFLRRGDYPDYQQWMGFSDSVRSCRLIPHSSSHRIKIYEREDYRGQMVEITDDCSHLQDRFHFSDFHSFHVMEGYWVLYEMPNYRGRQYLLRPGEYRRYHDWGAMNARVGSLRRIMDFY.

Beta/gamma crystallin 'Greek key' domains lie at 2 to 40 (GKITFYEDRGFQGRHYECSTDHSNLQPYFSRCNSVRVDS) and 41 to 83 (GCWM…RLIP). A connecting peptide region spans residues 84-87 (HSSS). 2 Beta/gamma crystallin 'Greek key' domains span residues 88–128 (HRIK…HVME) and 129–171 (GYWV…RRIM).

It belongs to the beta/gamma-crystallin family. In terms of tissue distribution, detected in the superior olivary complex of the auditory hindbrain.

Its function is as follows. Crystallins are the dominant structural components of the vertebrate eye lens. This is Gamma-crystallin E (Cryge) from Mus musculus (Mouse).